The sequence spans 687 residues: Adhesion G-protein coupled receptor G1 (687 aa).

An N-terminal signal peptide occupies residues 1–25; it reads MTAQSLLQTTLFLLSLLFLVQGAHG. Residue 26–33 participates in heparin binding; it reads RGHREDFR. Topologically, residues 26 to 402 are extracellular; sequence RGHREDFRFC…VEVDAVHKHY (377 aa). Cystine bridges form between Cys35–Cys91 and Cys121–Cys177. 4 N-linked (GlcNAc...) asparagine glycosylation sites follow: Asn39, Asn148, Asn156, and Asn171. Residue 190–200 participates in heparin binding; it reads LKHPQKASRRP. Positions 224 to 395 constitute a GAIN-B domain; sequence DTVSFEEDRV…AVLMVSSVEV (172 aa). 4 N-linked (GlcNAc...) asparagine glycosylation sites follow: Asn234, Asn303, Asn324, and Asn341. 2 disulfide bridges follow: Cys346-Cys377 and Cys366-Cys379. The tract at residues 346–395 is GPS; the sequence is CVFWVEDPTLSNPGRWSSAGCETVRRETQTSCFCNHLTYFAVLMVSSVEV. The tract at residues 384–397 is stachel; the sequence is YFAVLMVSSVEVDA. Residues 403–423 form a helical membrane-spanning segment; it reads LSLLSYVGCVVSALACVVTIA. Over 424–442 the chain is Cytoplasmic; that stretch reads AYLCSRRKPRDYTIKVHMN. Residues 443–463 traverse the membrane as a helical segment; the sequence is LLLAVFLLDVSFLLSEPVALT. Topologically, residues 464-470 are extracellular; that stretch reads GSQSGCR. The chain crosses the membrane as a helical span at residues 471 to 491; it reads ASAIFLHFSLLACLSWMGLEG. Over 492-512 the chain is Cytoplasmic; sequence YNLYRLVVEVFGTYIPGYLLK. Residues 513–533 traverse the membrane as a helical segment; it reads LSAMGWGFPIFLVTLVALVDV. Residues 534-570 lie on the Extracellular side of the membrane; the sequence is DNYGPIILAVHRTPESVIYPSMCWIRDSLVSYITNLG. A helical transmembrane segment spans residues 571 to 591; sequence LFSLVFLFNMAMLGTMVVQIL. The Cytoplasmic portion of the chain corresponds to 592–603; that stretch reads RLRPHTQKWSHV. The chain crosses the membrane as a helical span at residues 604–624; it reads LTLLGLSLVLGLPWALIFFSF. The Extracellular segment spans residues 625–630; the sequence is ASGTFQ. A helical transmembrane segment spans residues 631–651; sequence LVVLYLFSIITSFQGFLIFLW. The Cytoplasmic portion of the chain corresponds to 652–687; sequence YWSMRLQARGGPSPLKSNSDSARLPISTGSTSSSRI. The segment at 664 to 687 is disordered; the sequence is SPLKSNSDSARLPISTGSTSSSRI. Polar residues predominate over residues 666–687; it reads LKSNSDSARLPISTGSTSSSRI.

Belongs to the G-protein coupled receptor 2 family. LN-TM7 subfamily. Heterodimer of 2 chains generated by proteolytic processing; the large extracellular N-terminal fragment (ADGRG1 NT) and the membrane-bound C-terminal fragment (ADGRG1-CT) predominantly remain associated and non-covalently linked. ADGRG1 NT self-associates in a trans-trans manner; the homophilic interaction enhances receptor signaling. Interacts with TGM2. Interacts with heparin; leading to the reduction of ADGRG1 shedding. Interacts with COL3A1. Part of a GPCR-tetraspanin complex at least consisting of ADGRG1, CD81, eventually CD9, and GNA11 in which CD81 is enhancing the association of ADGRG1 with GNA11. Autoproteolytically cleaved into 2 fragments; the large extracellular N-terminal fragment (ADGRG1 NT) and the membrane-bound C-terminal fragment (ADGRG1 CT) predominantly remain associated and non-covalently linked. Shedding to yield the secreted ADGRG1 N-terminal fragment seems to involve metalloprotease(s). Post-translationally, ubiquitinated. Undergoes polyubiquitination upon activation.

The protein localises to the cell membrane. Its subcellular location is the secreted. It localises to the membrane raft. With respect to regulation, forms a heterodimer of 2 chains generated by proteolytic processing that remain associated through non-covalent interactions mediated by the GAIN-B domain. In the inactivated receptor, the Stachel sequence (also named stalk) is embedded in the GAIN-B domain, where it adopts a beta-strand conformation. On activation, the Stachel moves into the 7 transmembrane region and adopts a twisted hook-shaped configuration that forms contacts within the receptor, leading to coupling of a G-alpha protein, which activates signaling. The cleaved GAIN-B and N-terminal domains can then dissociate from the rest of the receptor. Its function is as follows. Adhesion G-protein coupled receptor (aGPCR) for steroid hormone 17alpha-hydroxypregnenolone (17-OH), which is involved in cell adhesion and cell-cell interactions. Ligand binding causes a conformation change that triggers signaling via guanine nucleotide-binding proteins (G proteins) and modulates the activity of downstream effectors, such as RhoA pathway. ADGRG1 is coupled to G(12) and/or G(13) G proteins (GNA12 and GNA13, respectively) and mediates the activation Rho small GTPases. Acts as a potent suppressor of ferroptosis: binding to 17-OH-binding initiates signaling that down-regulates CD36 and alleviates ferroptosis-induced liver injury. Ligand-binding also induces cell adhesion activity via association with proteins such as collagen III/COL3A1 and TGM2. Mediates cell matrix adhesion in developing neurons and hematopoietic stem cells. Involved in cortical development, specifically in maintenance of the pial basement membrane integrity and in cortical lamination: association with COL3A1 in the developing brain inhibits neuronal migration via activation of the RhoA pathway. Together with TGM2, acts as a regulator of myelination and myelin repair in oligodendrocyte precursor cells. Acts as a hemostatic sensor of shear force: G protein-coupled receptor signaling is activated in response to shear force in platelets, promoting G(13) G protein signaling, and platelet shape change and aggregation in a COL3A1-dependent manner. Acts as an inhibitor of VEGFA production thereby inhibiting angiogenesis through a signaling pathway mediated by PRKCA. Plays a role in the maintenance of hematopoietic stem cells in bone marrow niche. Plays an essential role in testis development. The protein is Adhesion G-protein coupled receptor G1 (ADGRG1) of Macaca mulatta (Rhesus macaque).